Here is a 168-residue protein sequence, read N- to C-terminus: Co-chaperone protein HscB homolog (168 aa).

Residues 5 to 77 enclose the J domain; the sequence is DYFSLFGLPS…MLRARYLCES (73 aa).

It belongs to the HscB family. As to quaternary structure, interacts with HscA and stimulates its ATPase activity.

Co-chaperone involved in the maturation of iron-sulfur cluster-containing proteins. Seems to help targeting proteins to be folded toward HscA. The chain is Co-chaperone protein HscB homolog from Bordetella avium (strain 197N).